Reading from the N-terminus, the 1245-residue chain is Prospore membrane adapter protein SPO71 (1245 aa).

A disordered region spans residues 207 to 270 (LHEEDQENTN…DFNYNREPSE (64 aa)). A compositionally biased stretch (basic and acidic residues) spans 227–247 (KRKDLGESKSISRKDYSHFDR). The PxP signature appears at 385-399 (INILPPWPTELTEEE). The PH domain occupies 1030–1229 (LIQKGPLYQK…WVMSIYYELE (200 aa)). A disordered region spans residues 1154 to 1192 (KKGNEKQYTQDYGRQDNNIDPPSAPEADLNNSNVPSNTD). 2 stretches are compositionally biased toward polar residues: residues 1159–1173 (KQYTQDYGRQDNNID) and 1182–1191 (LNNSNVPSNT).

It belongs to the SPO71 family. Interacts (via PxP motif) with VPS13 (via SHR-BD domain); during prospore membrane formation.

Its subcellular location is the prospore membrane. Functionally, recruits the lipid transfer protein VPS13 to the prospore membrane during sporulation, thereby aiding prospore membrane formation. This chain is Prospore membrane adapter protein SPO71 (SPO71), found in Saccharomyces cerevisiae (strain ATCC 204508 / S288c) (Baker's yeast).